Reading from the N-terminus, the 717-residue chain is Fatty acid oxidation complex subunit alpha (717 aa).

The enoyl-CoA hydratase/isomerase stretch occupies residues 1-190 (MIHAGNAITV…KDGAVDAVVS (190 aa)). Asp-298 contacts substrate. The interval 313 to 717 (HPVNQAAVLG…MAENNKKFYG (405 aa)) is 3-hydroxyacyl-CoA dehydrogenase. NAD(+) contacts are provided by residues Met-326, Asp-345, 402-404 (VTE), Lys-409, and Ser-431. The active-site For 3-hydroxyacyl-CoA dehydrogenase activity is His-452. Asn-455 contacts NAD(+). A substrate-binding site is contributed by Asn-502.

This sequence in the N-terminal section; belongs to the enoyl-CoA hydratase/isomerase family. In the C-terminal section; belongs to the 3-hydroxyacyl-CoA dehydrogenase family. As to quaternary structure, heterotetramer of two alpha chains (FadB) and two beta chains (FadA).

The catalysed reaction is a (3S)-3-hydroxyacyl-CoA + NAD(+) = a 3-oxoacyl-CoA + NADH + H(+). The enzyme catalyses a (3S)-3-hydroxyacyl-CoA = a (2E)-enoyl-CoA + H2O. It carries out the reaction a 4-saturated-(3S)-3-hydroxyacyl-CoA = a (3E)-enoyl-CoA + H2O. It catalyses the reaction (3S)-3-hydroxybutanoyl-CoA = (3R)-3-hydroxybutanoyl-CoA. The catalysed reaction is a (3Z)-enoyl-CoA = a 4-saturated (2E)-enoyl-CoA. The enzyme catalyses a (3E)-enoyl-CoA = a 4-saturated (2E)-enoyl-CoA. It functions in the pathway lipid metabolism; fatty acid beta-oxidation. Involved in the aerobic and anaerobic degradation of long-chain fatty acids via beta-oxidation cycle. Catalyzes the formation of 3-oxoacyl-CoA from enoyl-CoA via L-3-hydroxyacyl-CoA. It can also use D-3-hydroxyacyl-CoA and cis-3-enoyl-CoA as substrate. This is Fatty acid oxidation complex subunit alpha from Acinetobacter baylyi (strain ATCC 33305 / BD413 / ADP1).